A 465-amino-acid polypeptide reads, in one-letter code: Argininosuccinate lyase (465 aa).

The protein belongs to the lyase 1 family. Argininosuccinate lyase subfamily.

The protein localises to the cytoplasm. It carries out the reaction 2-(N(omega)-L-arginino)succinate = fumarate + L-arginine. It participates in amino-acid biosynthesis; L-arginine biosynthesis; L-arginine from L-ornithine and carbamoyl phosphate: step 3/3. This is Argininosuccinate lyase from Rhodopseudomonas palustris (strain BisB5).